Reading from the N-terminus, the 322-residue chain is HPr kinase/phosphorylase (322 aa).

Catalysis depends on residues His-146 and Lys-167. 161-168 (GDSGLGKS) serves as a coordination point for ATP. Ser-168 contributes to the Mg(2+) binding site. Asp-185 functions as the Proton acceptor; for phosphorylation activity. Proton donor; for dephosphorylation activity in the catalytic mechanism. Residues 209–218 (LEVRGLGLLD) form an important for the catalytic mechanism of both phosphorylation and dephosphorylation region. A Mg(2+)-binding site is contributed by Glu-210. Residue Arg-250 is part of the active site. The interval 271–276 (QVAAGR) is important for the catalytic mechanism of dephosphorylation.

The protein belongs to the HPrK/P family. As to quaternary structure, homohexamer. Mg(2+) is required as a cofactor.

It carries out the reaction [HPr protein]-L-serine + ATP = [HPr protein]-O-phospho-L-serine + ADP + H(+). The enzyme catalyses [HPr protein]-O-phospho-L-serine + phosphate + H(+) = [HPr protein]-L-serine + diphosphate. Functionally, catalyzes the ATP- as well as the pyrophosphate-dependent phosphorylation of a specific serine residue in HPr, a phosphocarrier protein of the phosphoenolpyruvate-dependent sugar phosphotransferase system (PTS). HprK/P also catalyzes the pyrophosphate-producing, inorganic phosphate-dependent dephosphorylation (phosphorolysis) of seryl-phosphorylated HPr (P-Ser-HPr). In Burkholderia multivorans (strain ATCC 17616 / 249), this protein is HPr kinase/phosphorylase.